Consider the following 328-residue polypeptide: Malate dehydrogenase (328 aa).

Residue Gly12–Ala18 coordinates NAD(+). Substrate contacts are provided by Arg93 and Arg99. NAD(+)-binding positions include Asn106, Gln113, and Val130–Asn132. Substrate contacts are provided by Asn132 and Arg163. Catalysis depends on His188, which acts as the Proton acceptor.

Belongs to the LDH/MDH superfamily. MDH type 2 family.

It catalyses the reaction (S)-malate + NAD(+) = oxaloacetate + NADH + H(+). Functionally, catalyzes the reversible oxidation of malate to oxaloacetate. The chain is Malate dehydrogenase from Burkholderia cenocepacia (strain HI2424).